Here is a 385-residue protein sequence, read N- to C-terminus: Digeranylgeranylglycerophospholipid reductase 2 (385 aa).

10 residues coordinate FAD: A13, E32, C43, A44, G46, R95, A119, D273, G285, and I286.

This sequence belongs to the geranylgeranyl reductase family. DGGGPL reductase subfamily. FAD is required as a cofactor.

The enzyme catalyses a 2,3-bis-O-phytanyl-sn-glycerol 1-phospholipid + 8 A = a 2,3-bis-O-(geranylgeranyl)-sn-glycerol 1-phospholipid + 8 AH2. It catalyses the reaction 2,3-bis-O-(phytanyl)-sn-glycerol 1-phosphate + 8 A = 2,3-bis-O-(geranylgeranyl)-sn-glycerol 1-phosphate + 8 AH2. The catalysed reaction is CDP-2,3-bis-O-(geranylgeranyl)-sn-glycerol + 8 AH2 = CDP-2,3-bis-O-(phytanyl)-sn-glycerol + 8 A. It carries out the reaction archaetidylserine + 8 AH2 = 2,3-bis-O-phytanyl-sn-glycero-3-phospho-L-serine + 8 A. It participates in membrane lipid metabolism; glycerophospholipid metabolism. Functionally, is involved in the reduction of 2,3-digeranylgeranylglycerophospholipids (unsaturated archaeols) into 2,3-diphytanylglycerophospholipids (saturated archaeols) in the biosynthesis of archaeal membrane lipids. Catalyzes the formation of archaetidic acid (2,3-di-O-phytanyl-sn-glyceryl phosphate) from 2,3-di-O-geranylgeranylglyceryl phosphate (DGGGP) via the hydrogenation of each double bond of the isoprenoid chains. Is also probably able to reduce double bonds of geranyl groups in CDP-2,3-bis-O-(geranylgeranyl)-sn-glycerol and archaetidylserine, thus acting at various stages in the biosynthesis of archaeal membrane lipids. The chain is Digeranylgeranylglycerophospholipid reductase 2 from Methanothermobacter thermautotrophicus (strain ATCC 29096 / DSM 1053 / JCM 10044 / NBRC 100330 / Delta H) (Methanobacterium thermoautotrophicum).